We begin with the raw amino-acid sequence, 412 residues long: Cysteate synthase (412 aa).

N6-(pyridoxal phosphate)lysine is present on Lys105. 2 residues coordinate pyridoxal 5'-phosphate: Asn131 and Thr382.

It belongs to the threonine synthase family. Cysteate synthase subfamily. In terms of assembly, homotrimer. Requires pyridoxal 5'-phosphate as cofactor.

It carries out the reaction O-phospho-L-serine + sulfite + H(+) = L-cysteate + phosphate. The protein operates within cofactor biosynthesis; coenzyme M biosynthesis. Its function is as follows. Specifically catalyzes the beta-elimination of phosphate from L-phosphoserine and the beta-addition of sulfite to the dehydroalanine intermediate to produce L-cysteate. This chain is Cysteate synthase, found in Methanocorpusculum labreanum (strain ATCC 43576 / DSM 4855 / Z).